The chain runs to 687 residues: UvrABC system protein C (687 aa).

The GIY-YIG domain occupies 16–95 (TEPGVYKFRD…IKKFDPHFNV (80 aa)). A UVR domain is found at 208–243 (DSVVRRLTNEMISASEALDFEKAARKRDDLNAVRKI).

This sequence belongs to the UvrC family. As to quaternary structure, interacts with UvrB in an incision complex.

The protein resides in the cytoplasm. Its function is as follows. The UvrABC repair system catalyzes the recognition and processing of DNA lesions. UvrC both incises the 5' and 3' sides of the lesion. The N-terminal half is responsible for the 3' incision and the C-terminal half is responsible for the 5' incision. This Corynebacterium diphtheriae (strain ATCC 700971 / NCTC 13129 / Biotype gravis) protein is UvrABC system protein C.